We begin with the raw amino-acid sequence, 341 residues long: HTH-type transcriptional repressor PurR (341 aa).

Residues 2–56 (ATIKDVAKRAGVSTTTVSHVINKTRFVAEETKAAVRAAIKELHYSPSAVARSLKV) enclose the HTH lacI-type domain. The segment at residues 4–23 (IKDVAKRAGVSTTTVSHVIN) is a DNA-binding region (H-T-H motif). The DNA-binding element occupies 48 to 56 (SAVARSLKV). 5 residues coordinate hypoxanthine: tyrosine 73, arginine 190, threonine 192, phenylalanine 221, and aspartate 275.

In terms of assembly, homodimer.

It functions in the pathway purine metabolism; purine nucleotide biosynthesis [regulation]. Functionally, is the main repressor of the genes involved in the de novo synthesis of purine nucleotides, regulating purB, purC, purEK, purF, purHD, purL, purMN and guaBA expression. PurR is allosterically activated to bind its cognate DNA by binding the purine corepressors, hypoxanthine or guanine, thereby effecting transcription repression. The polypeptide is HTH-type transcriptional repressor PurR (Pectobacterium atrosepticum (strain SCRI 1043 / ATCC BAA-672) (Erwinia carotovora subsp. atroseptica)).